The chain runs to 192 residues: Segregation and condensation protein B (192 aa).

This sequence belongs to the ScpB family. Homodimer. Homodimerization may be required to stabilize the binding of ScpA to the Smc head domains. Component of a cohesin-like complex composed of ScpA, ScpB and the Smc homodimer, in which ScpA and ScpB bind to the head domain of Smc. The presence of the three proteins is required for the association of the complex with DNA.

It is found in the cytoplasm. Participates in chromosomal partition during cell division. May act via the formation of a condensin-like complex containing Smc and ScpA that pull DNA away from mid-cell into both cell halves. In Oceanobacillus iheyensis (strain DSM 14371 / CIP 107618 / JCM 11309 / KCTC 3954 / HTE831), this protein is Segregation and condensation protein B.